Reading from the N-terminus, the 946-residue chain is Protocadherin alpha-10 (946 aa).

Residues 1–30 (MSCVAMKYCHESWCLLLSLLLFAIWEPGSG) form the signal peptide. Cadherin domains are found at residues 31 to 134 (QLRY…PPVF), 135 to 243 (PTTE…APAF), 244 to 351 (DRAI…APKI), 352 to 456 (IVTS…APAF), 457 to 566 (AQSE…APTL), and 582 to 679 (VPRS…APKA). Residues 31–697 (QLRYSVPEEA…ASESSVVDVN (667 aa)) are Extracellular-facing. Asn258 carries N-linked (GlcNAc...) asparagine glycosylation. An N-linked (GlcNAc...) asparagine glycan is attached at Asn549. The helical transmembrane segment at 698–718 (VYLIIAICAVSSLLVLTLVLY) threads the bilayer. The Cytoplasmic portion of the chain corresponds to 719-946 (TALRCSALPT…GNSTTDNSDQ (228 aa)). PXXP repeat units lie at residues 734-737 (PGKP), 774-777 (PSVP), 795-798 (PRQP), 828-831 (PGGP), 869-872 (PGNP), and 887-890 (PGSP). A 6 X 4 AA repeats of P-X-X-P region spans residues 734–890 (PGKPMLVCSS…PDKFIIPGSP (157 aa)). Disordered regions lie at residues 826–852 (AGPG…EVSP) and 865–946 (FKYG…NSDQ). The segment covering 905–919 (DKSDFITFGKKEETK) has biased composition (basic and acidic residues).

It is found in the cell membrane. Functionally, potential calcium-dependent cell-adhesion protein. May be involved in the establishment and maintenance of specific neuronal connections in the brain. The sequence is that of Protocadherin alpha-10 from Mus musculus (Mouse).